We begin with the raw amino-acid sequence, 348 residues long: NADH-quinone oxidoreductase subunit H (348 aa).

Transmembrane regions (helical) follow at residues 10 to 30 (LPLF…LVLI), 82 to 102 (GVFL…WAVV), 115 to 135 (VGLL…IMGG), 161 to 181 (IGFV…TTIV), 199 to 219 (LLDW…ISAL), 251 to 271 (LFFL…TILF), 287 to 307 (VPGV…FAMV), and 322 to 342 (LGWK…AAIL).

This sequence belongs to the complex I subunit 1 family. NDH-1 is composed of 14 different subunits. Subunits NuoA, H, J, K, L, M, N constitute the membrane sector of the complex.

The protein localises to the cell inner membrane. The enzyme catalyses a quinone + NADH + 5 H(+)(in) = a quinol + NAD(+) + 4 H(+)(out). In terms of biological role, NDH-1 shuttles electrons from NADH, via FMN and iron-sulfur (Fe-S) centers, to quinones in the respiratory chain. The immediate electron acceptor for the enzyme in this species is believed to be ubiquinone. Couples the redox reaction to proton translocation (for every two electrons transferred, four hydrogen ions are translocated across the cytoplasmic membrane), and thus conserves the redox energy in a proton gradient. This subunit may bind ubiquinone. The polypeptide is NADH-quinone oxidoreductase subunit H (Bartonella bacilliformis (strain ATCC 35685 / KC583 / Herrer 020/F12,63)).